The sequence spans 542 residues: CTP synthase (542 aa).

The interval 1-265 (MTRYIFVTGG…DDFVVERFGL (265 aa)) is amidoligase domain. Serine 13 contributes to the CTP binding site. Serine 13 is a binding site for UTP. Residues 14 to 19 (SLGKGI) and aspartate 71 each bind ATP. The Mg(2+) site is built by aspartate 71 and glutamate 139. Residues 146-148 (DIE), 186-191 (KTKPTQ), and lysine 222 contribute to the CTP site. Residues 186–191 (KTKPTQ) and lysine 222 each bind UTP. One can recognise a Glutamine amidotransferase type-1 domain in the interval 290-541 (TIAMVGKYME…VKAALAQKNK (252 aa)). Glycine 351 lines the L-glutamine pocket. Catalysis depends on cysteine 378, which acts as the Nucleophile; for glutamine hydrolysis. L-glutamine is bound by residues 379–382 (LGMQ), glutamate 402, and arginine 469. Residues histidine 514 and glutamate 516 contribute to the active site.

The protein belongs to the CTP synthase family. Homotetramer.

It carries out the reaction UTP + L-glutamine + ATP + H2O = CTP + L-glutamate + ADP + phosphate + 2 H(+). The enzyme catalyses L-glutamine + H2O = L-glutamate + NH4(+). It catalyses the reaction UTP + NH4(+) + ATP = CTP + ADP + phosphate + 2 H(+). It participates in pyrimidine metabolism; CTP biosynthesis via de novo pathway; CTP from UDP: step 2/2. With respect to regulation, allosterically activated by GTP, when glutamine is the substrate; GTP has no effect on the reaction when ammonia is the substrate. The allosteric effector GTP functions by stabilizing the protein conformation that binds the tetrahedral intermediate(s) formed during glutamine hydrolysis. Inhibited by the product CTP, via allosteric rather than competitive inhibition. Functionally, catalyzes the ATP-dependent amination of UTP to CTP with either L-glutamine or ammonia as the source of nitrogen. Regulates intracellular CTP levels through interactions with the four ribonucleotide triphosphates. This Pseudomonas putida (strain W619) protein is CTP synthase.